A 376-amino-acid chain; its full sequence is Mitogen-activated protein kinase ERK-A (376 aa).

The 289-residue stretch at 38–326 folds into the Protein kinase domain; the sequence is YIKLAYIGEG…VEEALAHPYL (289 aa). ATP is bound by residues 44–52 and K67; that span reads IGEGAYGMV. D162 serves as the catalytic Proton acceptor. The residue at position 198 (T198) is a Phosphothreonine. Residues 198-200 carry the TXY motif; it reads TEY. At Y200 the chain carries Phosphotyrosine.

This sequence belongs to the protein kinase superfamily. CMGC Ser/Thr protein kinase family. MAP kinase subfamily. Mg(2+) serves as cofactor. Dually phosphorylated on Thr-198 and Tyr-200, which activates the enzyme. Phosphorylated on tyrosine residue(s) in response to insulin. As to expression, in third instar larvae, expressed in eye imaginal disks. In adults, expressed in head and body.

The protein localises to the cytoplasm. Its subcellular location is the nucleus. The enzyme catalyses L-seryl-[protein] + ATP = O-phospho-L-seryl-[protein] + ADP + H(+). It catalyses the reaction L-threonyl-[protein] + ATP = O-phospho-L-threonyl-[protein] + ADP + H(+). Activated by tyrosine and threonine phosphorylation. Functionally, serine/threonine kinase which acts as an essential component of the MAP kinase signal transduction pathway to regulate proliferation, differentiation and effect cell fate decisions in various tissues. Required downstream of phl/Raf in the sev/sevenless, tor/torso, and EGF receptor homolog Egfr signal transduction pathways. Required for embryonic epithelial tissue repair. During larval development, mediates Ptth/tor signaling leading to the production of ecdysone, a hormone required for the initiation of metamorphosis. In Drosophila melanogaster (Fruit fly), this protein is Mitogen-activated protein kinase ERK-A.